The sequence spans 255 residues: MFKVDLNSDLGESFGAYKMGMDEEILKFVSSVNVACGFHAGDPCVMDKTLNLAKQNGVCIGAHPSYPDLLGFGRRNMQISFEEAKNYALYQLGALFGFAKAKDMKIQHFKAHGALYNMAAIDENLALALCEAVASFDENIIFLGLSNSAMNEAAKKKGLKYANEVFADRAYNDDGTLVSRKLEGALIHDENLAIKRVIKMIKESKVTSINGKEIDLKADSICVHGDNVKALEFVKKIKENLEKEQIQICALENFI.

Belongs to the LamB/PxpA family. As to quaternary structure, forms a complex composed of PxpA, PxpB and PxpC.

The enzyme catalyses 5-oxo-L-proline + ATP + 2 H2O = L-glutamate + ADP + phosphate + H(+). Catalyzes the cleavage of 5-oxoproline to form L-glutamate coupled to the hydrolysis of ATP to ADP and inorganic phosphate. The sequence is that of 5-oxoprolinase subunit A from Campylobacter jejuni subsp. doylei (strain ATCC BAA-1458 / RM4099 / 269.97).